A 788-amino-acid chain; its full sequence is Ribonucleoside-diphosphate reductase subunit alpha (788 aa).

Residues 2–92 (ITVVKRNGRI…LYDLYHKVSG (91 aa)) enclose the ATP-cone domain. Residues Lys-6, 12-18 (EPLDITK), and Thr-52 contribute to the ATP site. Thr-200 serves as a coordination point for GDP. A disulfide bond links Cys-216 and Cys-497. DTTP is bound by residues 223–225 (DNI) and Arg-253. Residue Asn-424 participates in GDP binding. Asn-424 (proton acceptor) is an active-site residue. The Cysteine radical intermediate role is filled by Cys-426. GDP is bound by residues Glu-428 and 661-663 (SSI). Glu-428 serves as the catalytic Proton acceptor.

It belongs to the ribonucleoside diphosphate reductase large chain family. Tetramer of two alpha and two beta subunits.

It carries out the reaction a 2'-deoxyribonucleoside 5'-diphosphate + [thioredoxin]-disulfide + H2O = a ribonucleoside 5'-diphosphate + [thioredoxin]-dithiol. With respect to regulation, under complex allosteric control mediated by deoxynucleoside triphosphates and ATP binding to separate specificity and activation sites on the alpha subunit. The type of nucleotide bound at the specificity site determines substrate preference. It seems probable that ATP makes the enzyme reduce CDP and UDP, dGTP favors ADP reduction and dTTP favors GDP reduction. Stimulated by ATP and inhibited by dATP binding to the activity site. Functionally, provides the precursors necessary for DNA synthesis. Catalyzes the biosynthesis of deoxyribonucleotides from the corresponding ribonucleotides. The protein is Ribonucleoside-diphosphate reductase subunit alpha (nrdA) of Helicobacter pylori (strain J99 / ATCC 700824) (Campylobacter pylori J99).